The sequence spans 227 residues: Ribonuclease 3 (227 aa).

An RNase III domain is found at 4 to 133 (FEKLEKLLSY…LIAAIYLDSN (130 aa)). Glu46 provides a ligand contact to Mg(2+). The active site involves Asp50. Mg(2+) is bound by residues Asn119 and Glu122. Residue Glu122 is part of the active site. Residues 158–226 (DPKTALQEWA…ARSLLHRLKN (69 aa)) enclose the DRBM domain.

It belongs to the ribonuclease III family. Homodimer. Mg(2+) serves as cofactor.

The protein localises to the cytoplasm. It carries out the reaction Endonucleolytic cleavage to 5'-phosphomonoester.. Digests double-stranded RNA. Involved in the processing of primary rRNA transcript to yield the immediate precursors to the large and small rRNAs (23S and 16S). Processes some mRNAs, and tRNAs when they are encoded in the rRNA operon. Processes pre-crRNA and tracrRNA of type II CRISPR loci if present in the organism. The polypeptide is Ribonuclease 3 (Rickettsia africae (strain ESF-5)).